The primary structure comprises 422 residues: Glucose-1-phosphate adenylyltransferase (422 aa).

Alpha-D-glucose 1-phosphate-binding positions include Y108, G173, 188-189 (EK), and S206.

This sequence belongs to the bacterial/plant glucose-1-phosphate adenylyltransferase family. Homotetramer.

It carries out the reaction alpha-D-glucose 1-phosphate + ATP + H(+) = ADP-alpha-D-glucose + diphosphate. The protein operates within glycan biosynthesis; glycogen biosynthesis. Functionally, involved in the biosynthesis of ADP-glucose, a building block required for the elongation reactions to produce glycogen. Catalyzes the reaction between ATP and alpha-D-glucose 1-phosphate (G1P) to produce pyrophosphate and ADP-Glc. This Paraburkholderia phymatum (strain DSM 17167 / CIP 108236 / LMG 21445 / STM815) (Burkholderia phymatum) protein is Glucose-1-phosphate adenylyltransferase.